The primary structure comprises 144 residues: Cornifin-A (144 aa).

Positions 1–41 (MSSHQQKQPCTVPPQLHQQQVKQPCQPPPQEPCAPKTKDPC) are disordered. Residues 13-24 (PPQLHQQQVKQP) show a composition bias toward low complexity. Repeat copies occupy residues 27–34 (PPPQEPCA), 35–42 (PKTKDPCH), 43–49 (PVPEPCN), 50–57 (PKGPEPCH), 58–65 (PKAPEPCH), 66–73 (PKAPEPCN), 74–81 (PKVPEPCQ), 82–89 (PKVPEPCQ), 90–97 (PKVPEPCN), 98–105 (PKVPEPCQ), 106–113 (PKAPEPCH), 114–121 (PKAPEPCH), and 122–129 (PVVPEPCP). Positions 27-129 (PPPQEPCAPK…CHPVVPEPCP (103 aa)) are 13 X 8 AA approximate tandem repeats.

It belongs to the cornifin (SPRR) family. In terms of tissue distribution, expressed in fetal periderm, hair follicles and in the thickened epidermis of the lip and footpad. Also present in the epithelia of various tissues such as the penis, vagina, forestomach, tongue and esophagus.

It is found in the cytoplasm. Functionally, cross-linked envelope protein of keratinocytes. It is a keratinocyte protein that first appears in the cell cytosol, but ultimately becomes cross-linked to membrane proteins by transglutaminase. All that results in the formation of an insoluble envelope beneath the plasma membrane. May participate widely in the construction of cell envelopes in cornifying epithelia characterized by either increased thickness or a requirement for extreme flexibility. This is Cornifin-A (Sprr1a) from Mus musculus (Mouse).